Here is a 163-residue protein sequence, read N- to C-terminus: NADH-quinone oxidoreductase subunit I (163 aa).

2 consecutive 4Fe-4S ferredoxin-type domains span residues 53–83 (LRRY…IEAG) and 94–123 (VRYD…EGPN). 8 residues coordinate [4Fe-4S] cluster: C63, C66, C69, C73, C103, C106, C109, and C113.

It belongs to the complex I 23 kDa subunit family. In terms of assembly, NDH-1 is composed of 14 different subunits. Subunits NuoA, H, J, K, L, M, N constitute the membrane sector of the complex. Requires [4Fe-4S] cluster as cofactor.

Its subcellular location is the cell inner membrane. It carries out the reaction a quinone + NADH + 5 H(+)(in) = a quinol + NAD(+) + 4 H(+)(out). NDH-1 shuttles electrons from NADH, via FMN and iron-sulfur (Fe-S) centers, to quinones in the respiratory chain. The immediate electron acceptor for the enzyme in this species is believed to be ubiquinone. Couples the redox reaction to proton translocation (for every two electrons transferred, four hydrogen ions are translocated across the cytoplasmic membrane), and thus conserves the redox energy in a proton gradient. The chain is NADH-quinone oxidoreductase subunit I from Brucella canis (strain ATCC 23365 / NCTC 10854 / RM-666).